Reading from the N-terminus, the 384-residue chain is L-cysteine:1D-myo-inositol 2-amino-2-deoxy-alpha-D-glucopyranoside ligase (384 aa).

Position 16 (cysteine 16) interacts with Zn(2+). L-cysteinyl-5'-AMP-binding positions include cysteine 16–threonine 19, threonine 31, and asparagine 54–threonine 56. The 'HIGH' region motif lies at isoleucine 18–histidine 28. The 'ERGGDP' region motif lies at glutamine 159–proline 164. An L-cysteinyl-5'-AMP-binding site is contributed by tryptophan 199. Cysteine 203 contacts Zn(2+). Glycine 221 to aspartate 223 is a binding site for L-cysteinyl-5'-AMP. Histidine 228 serves as a coordination point for Zn(2+). Isoleucine 255 lines the L-cysteinyl-5'-AMP pocket. The short motif at lysine 261 to serine 265 is the 'KMSKS' region element.

This sequence belongs to the class-I aminoacyl-tRNA synthetase family. MshC subfamily. In terms of assembly, monomer. It depends on Zn(2+) as a cofactor.

It catalyses the reaction 1D-myo-inositol 2-amino-2-deoxy-alpha-D-glucopyranoside + L-cysteine + ATP = 1D-myo-inositol 2-(L-cysteinylamino)-2-deoxy-alpha-D-glucopyranoside + AMP + diphosphate + H(+). Its function is as follows. Catalyzes the ATP-dependent condensation of GlcN-Ins and L-cysteine to form L-Cys-GlcN-Ins. This Mycobacterium leprae (strain Br4923) protein is L-cysteine:1D-myo-inositol 2-amino-2-deoxy-alpha-D-glucopyranoside ligase.